The following is a 423-amino-acid chain: UPF0597 protein TTE0269 (423 aa).

This sequence belongs to the UPF0597 family.

This is UPF0597 protein TTE0269 from Caldanaerobacter subterraneus subsp. tengcongensis (strain DSM 15242 / JCM 11007 / NBRC 100824 / MB4) (Thermoanaerobacter tengcongensis).